A 481-amino-acid chain; its full sequence is RAC-alpha serine/threonine-protein kinase (481 aa).

Positions 5-108 constitute a PH domain; sequence AIVKEGWLHK…WIQVIQHVAD (104 aa). The interval 120-141 is disordered; that stretch reads VRSGDSPSDNSGAEEMEVSHSK. O-linked (GlcNAc) serine glycosylation is found at Ser-127 and Ser-130. Positions 151 to 409 constitute a Protein kinase domain; it reads FEYLKLLGKG…AKEIMQHKFF (259 aa). ATP contacts are provided by residues 157 to 165 and Lys-180; that span reads LGKGTFGKV. The active-site Proton acceptor is the Asp-275. Residue Thr-306 is glycosylated (O-linked (GlcNAc) threonine). Residue Thr-309 is modified to Phosphothreonine; by PDPK1. The O-linked (GlcNAc) threonine glycan is linked to Thr-313. In terms of domain architecture, AGC-kinase C-terminal spans 410–481; the sequence is AGIVWQDVYE…QFSYSASGNA (72 aa). Position 474 is a phosphoserine (Ser-474). An O-linked (GlcNAc) serine; alternate glycan is attached at Ser-474. Tyr-475 carries the phosphotyrosine modification.

Belongs to the protein kinase superfamily. AGC Ser/Thr protein kinase family. RAC subfamily. Post-translationally, cleavage by caspase-3/CASP3. Cleaved at the caspase-3 consensus site Asp-463 during apoptosis, resulting in down-regulation of the AKT signaling pathway and decreased cell survival. Phosphorylation on Thr-309 and Ser-474 is required for full activity. Phosphorylation of the activation loop at Thr-309 by PDPK1/PDK1 is a prerequisite for full activation. Phosphorylation by mTORC2 at Ser-474 in response to growth factors plays a key role in AKT1 activation by facilitating subsequent phosphorylation of the activation loop by PDPK1/PDK1. In terms of tissue distribution, expressed in the oocyte.

It is found in the cytoplasm. It localises to the nucleus. The catalysed reaction is L-seryl-[protein] + ATP = O-phospho-L-seryl-[protein] + ADP + H(+). It catalyses the reaction L-threonyl-[protein] + ATP = O-phospho-L-threonyl-[protein] + ADP + H(+). Activated in response to insulin. Three specific sites, one in the kinase domain (Thr-309) and the two other ones in the C-terminal regulatory region (Ser-474 and Tyr-475), need to be phosphorylated for its full activation. AKT1 is one of several closely related serine/threonine-protein kinases known as the AKT kinase, and which regulate many processes including metabolism, proliferation, cell survival, growth and angiogenesis. This is mediated through serine and/or threonine phosphorylation of a range of downstream substrates. Over 100 substrate candidates have been reported so far, but for most of them, no isoform specificity has been reported. Signals downstream of phosphatidylinositol 3-kinase (PI(3)K) to mediate the effects of various growth factors such as platelet-derived growth factor (PDGF), epidermal growth factor (EGF), insulin and insulin-like growth factor 1 (IGF1). Plays a role as a key modulator of the AKT-mTOR signaling pathway controlling the tempo of the process of newborn neurons integration during adult neurogenesis, including correct neuron positioning, dendritic development and synapse formation. Plays a role in glucose transport by mediating insulin-induced translocation of the GLUT4 glucose transporter to the cell surface. Mediates the antiapoptotic effects of IGF1. Mediates insulin-stimulated protein synthesis, partly by playing a role in both insulin-induced phosphorylation of 4E-BP1 and in insulin-induced activation of p70 S6 kinase. Promotes glycogen synthesis by mediating the insulin-induced activation of glycogen synthase. Required for insulin-stimulated meiotic reinitiation during oocyte maturation. May be involved in the regulation of vesicular functions such as preciliary trafficking and endocytic recycling. This is RAC-alpha serine/threonine-protein kinase from Xenopus laevis (African clawed frog).